The sequence spans 346 residues: S-adenosylmethionine:tRNA ribosyltransferase-isomerase (346 aa).

This sequence belongs to the QueA family. In terms of assembly, monomer.

The protein resides in the cytoplasm. The catalysed reaction is 7-aminomethyl-7-carbaguanosine(34) in tRNA + S-adenosyl-L-methionine = epoxyqueuosine(34) in tRNA + adenine + L-methionine + 2 H(+). It functions in the pathway tRNA modification; tRNA-queuosine biosynthesis. In terms of biological role, transfers and isomerizes the ribose moiety from AdoMet to the 7-aminomethyl group of 7-deazaguanine (preQ1-tRNA) to give epoxyqueuosine (oQ-tRNA). The chain is S-adenosylmethionine:tRNA ribosyltransferase-isomerase from Lysinibacillus sphaericus (strain C3-41).